The chain runs to 180 residues: Insulin-like growth factor 2 (180 aa).

Positions 1–24 (MGIPVGKSMLVLLISLAFALCCIA) are cleaved as a signal peptide. Positions 25–52 (AYRPSETLCGGELVDTLQFVCSDRGFYF) are b. Cystine bridges form between Cys33/Cys71, Cys45/Cys84, and Cys70/Cys75. Residues 53–64 (SRPSSRANRRSR) are c. The segment at 65–85 (GIVEECCFRSCDLALLETYCA) is a. The segment at 86 to 91 (TPAKSE) is d. The propeptide at 92–180 (RDVSTSQAVL…ASSEMSSNHQ (89 aa)) is e peptide. Positions 160 to 180 (VLPPKDPAHGGASSEMSSNHQ) are disordered.

This sequence belongs to the insulin family. Interacts with MYORG; this interaction is required for IGF2 secretion. Interacts with integrins ITGAV:ITGB3 and ITGA6:ITGB4; integrin-binding is required for IGF2 signaling. Interacts with IGFBP2. Post-translationally, proteolytically processed by PCSK4, proIGF2 is cleaved at Arg-128 and Arg-92 to generate big-IGF2 and mature IGF2.

The protein resides in the secreted. Its function is as follows. The insulin-like growth factors possess growth-promoting activity. Major fetal growth hormone in mammals. Plays a key role in regulating fetoplacental development. IGF2 is influenced by placental lactogen. Also involved in tissue differentiation. In adults, involved in glucose metabolism in adipose tissue, skeletal muscle and liver. Acts as a ligand for integrin which is required for IGF2 signaling. Positively regulates myogenic transcription factor MYOD1 function by facilitating the recruitment of transcriptional coactivators, thereby controlling muscle terminal differentiation. Inhibits myoblast differentiation and modulates metabolism via increasing the mitochondrial respiration rate. In terms of biological role, preptin undergoes glucose-mediated co-secretion with insulin, and acts as a physiological amplifier of glucose-mediated insulin secretion. Exhibits osteogenic properties by increasing osteoblast mitogenic activity through phosphoactivation of MAPK1 and MAPK3. This Rattus norvegicus (Rat) protein is Insulin-like growth factor 2.